The sequence spans 443 residues: Carbohydrate sulfotransferase 9 (443 aa).

The Cytoplasmic segment spans residues 1-12 (MQPSEMVMNPKQ). The chain crosses the membrane as a helical; Signal-anchor for type II membrane protein span at residues 13–33 (VFLSVLIFGVAGLLLFMYLQV). Residues 34–443 (WIEEQHTGRV…LMFNYTTPFL (410 aa)) lie on the Lumenal side of the membrane. Over residues 108–128 (LTKTSHSQGGDQALSKSTGSP) the composition is skewed to polar residues. A disordered region spans residues 108–132 (LTKTSHSQGGDQALSKSTGSPTEKL). N-linked (GlcNAc...) asparagine glycosylation occurs at asparagine 159. Position 220-226 (220-226 (PKAGCSN)) interacts with 3'-phosphoadenylyl sulfate. Asparagine 243 is a glycosylation site (N-linked (GlcNAc...) asparagine). 3'-phosphoadenylyl sulfate is bound at residue 280–288 (RDPMERLVS). N-linked (GlcNAc...) asparagine glycosylation is found at asparagine 324 and asparagine 437.

This sequence belongs to the sulfotransferase 2 family. In terms of tissue distribution, highly expressed in trachea. Also expressed in fetal lung, adult pancreas, testis and salivary gland. Expressed at low level in pituitary gland, apex of the heart, adult lung, prostate and mammary gland. Weakly or not expressed in heart, liver and spinal cord.

It is found in the golgi apparatus membrane. Its subcellular location is the secreted. In terms of biological role, catalyzes the transfer of sulfate to position 4 of non-reducing N-acetylgalactosamine (GalNAc) residues in both N-glycans and O-glycans. Participates in biosynthesis of glycoprotein hormones lutropin and thyrotropin, by mediating sulfation of their carbohydrate structures. Has a higher activity toward carbonic anhydrase VI than toward lutropin. Only active against terminal GalNAcbeta1,GalNAcbeta. Isoform 2, but not isoform 1, is active toward chondroitin. The sequence is that of Carbohydrate sulfotransferase 9 (CHST9) from Homo sapiens (Human).